The primary structure comprises 390 residues: Protein MalY (390 aa).

Position 233 is an N6-(pyridoxal phosphate)lysine (Lys-233).

Belongs to the class-II pyridoxal-phosphate-dependent aminotransferase family. MalY/PatB cystathionine beta-lyase subfamily. Homodimer. Interacts with MalT. The cofactor is pyridoxal 5'-phosphate.

It carries out the reaction L,L-cystathionine + H2O = L-homocysteine + pyruvate + NH4(+). The catalysed reaction is an S-substituted L-cysteine + H2O = a thiol + pyruvate + NH4(+). Functionally, acts as a beta-cystathionase and as a repressor of the maltose regulon. The polypeptide is Protein MalY (malY) (Escherichia coli (strain K12)).